Here is a 177-residue protein sequence, read N- to C-terminus: Large ribosomal subunit protein uL6 (177 aa).

It belongs to the universal ribosomal protein uL6 family. As to quaternary structure, part of the 50S ribosomal subunit.

Its function is as follows. This protein binds to the 23S rRNA, and is important in its secondary structure. It is located near the subunit interface in the base of the L7/L12 stalk, and near the tRNA binding site of the peptidyltransferase center. The sequence is that of Large ribosomal subunit protein uL6 from Tolumonas auensis (strain DSM 9187 / NBRC 110442 / TA 4).